We begin with the raw amino-acid sequence, 514 residues long: Serine--tRNA ligase, cytoplasmic (514 aa).

Methionine 1 is subject to N-acetylmethionine. The interval 9-61 (RVDKGGDPALIRETQEKRFKDPGLVDQLVKADSEWRRCRFRADNLNKLKNLCS) is interaction with tRNA. Phosphoserine is present on serine 241. L-serine contacts are provided by threonine 271 and arginine 302. ATP-binding positions include 302 to 304 (RQE) and 318 to 321 (VHQF). An N6-acetyllysine modification is found at lysine 323. L-serine is bound at residue glutamate 325. 391-394 (ELVS) contacts ATP. Asparagine 427 lines the L-serine pocket. Residues 472-514 (KPAPIDQEPSKKQKKQHEGSKKKAAARDVTLENRLQNMEVTDA) form a disordered region. The segment covering 479–502 (EPSKKQKKQHEGSKKKAAARDVTL) has biased composition (basic and acidic residues). The short motif at 482–494 (KKQKKQHEGSKKK) is the Nuclear localization signal element. Positions 504 to 514 (NRLQNMEVTDA) are enriched in polar residues.

This sequence belongs to the class-II aminoacyl-tRNA synthetase family. Type-1 seryl-tRNA synthetase subfamily. Homodimer. The tRNA molecule may bind across the dimer. Interacts with SIRT2. Interacts with METTL6; interaction is required for the tRNA N(3)-methylcytidine methyltransferase activity of METTL6.

The protein resides in the cytoplasm. It localises to the nucleus. It catalyses the reaction tRNA(Ser) + L-serine + ATP = L-seryl-tRNA(Ser) + AMP + diphosphate + H(+). The catalysed reaction is tRNA(Sec) + L-serine + ATP = L-seryl-tRNA(Sec) + AMP + diphosphate + H(+). The protein operates within aminoacyl-tRNA biosynthesis; selenocysteinyl-tRNA(Sec) biosynthesis; L-seryl-tRNA(Sec) from L-serine and tRNA(Sec): step 1/1. In terms of biological role, catalyzes the attachment of serine to tRNA(Ser) in a two-step reaction: serine is first activated by ATP to form Ser-AMP and then transferred to the acceptor end of tRNA(Ser). Is probably also able to aminoacylate tRNA(Sec) with serine, to form the misacylated tRNA L-seryl-tRNA(Sec), which will be further converted into selenocysteinyl-tRNA(Sec). In the nucleus, binds to the VEGFA core promoter and prevents MYC binding and transcriptional activation by MYC. Recruits SIRT2 to the VEGFA promoter, promoting deacetylation of histone H4 at 'Lys-16' (H4K16). Thereby, inhibits the production of VEGFA and sprouting angiogenesis mediated by VEGFA. This is Serine--tRNA ligase, cytoplasmic (SARS1) from Oryctolagus cuniculus (Rabbit).